The chain runs to 270 residues: uncharacterized protein (270 aa).

30 to 55 is a binding site for NADP(+); it reads ATGSLGRVAARALADAGARLTLAGGN. S157 contacts substrate. Y171 functions as the Proton acceptor in the catalytic mechanism.

This sequence belongs to the short-chain dehydrogenases/reductases (SDR) family.

This is an uncharacterized protein from Mycobacterium tuberculosis (strain CDC 1551 / Oshkosh).